A 396-amino-acid chain; its full sequence is Elongation factor Tu (396 aa).

The region spanning 10–206 (KPHCNIGTIG…QVDAYIPQPE (197 aa)) is the tr-type G domain. The G1 stretch occupies residues 19–26 (GHVDHGKT). Residue 19 to 26 (GHVDHGKT) participates in GTP binding. Threonine 26 is a Mg(2+) binding site. Residues 60–64 (GITIS) are G2. The tract at residues 81–84 (DCPG) is G3. Residues 81–85 (DCPGH) and 136–139 (NKVD) contribute to the GTP site. The G4 stretch occupies residues 136-139 (NKVD). The G5 stretch occupies residues 174–176 (SAL).

This sequence belongs to the TRAFAC class translation factor GTPase superfamily. Classic translation factor GTPase family. EF-Tu/EF-1A subfamily. As to quaternary structure, monomer.

The protein localises to the cytoplasm. The enzyme catalyses GTP + H2O = GDP + phosphate + H(+). Functionally, GTP hydrolase that promotes the GTP-dependent binding of aminoacyl-tRNA to the A-site of ribosomes during protein biosynthesis. This Gluconobacter oxydans (strain 621H) (Gluconobacter suboxydans) protein is Elongation factor Tu.